A 657-amino-acid polypeptide reads, in one-letter code: Receptor-type tyrosine-protein phosphatase R (657 aa).

The first 21 residues, 1 to 21 (MRRAVCFPALCLLLNLHAAGC), serve as a signal peptide directing secretion. Residues 22-227 (FSGNNDHFLA…EADKIWSKEG (206 aa)) lie on the Extracellular side of the membrane. Ser23 carries O-linked (Xyl...) (chondroitin sulfate) serine glycosylation. Asn129 is a glycosylation site (N-linked (GlcNAc...) asparagine). The helical transmembrane segment at 228-248 (FYAVVIFLSIFVIIVTCLMIL) threads the bilayer. At 249–657 (YRLKERFQLS…ESRLSAETVQ (409 aa)) the chain is on the cytoplasmic side. The residue at position 272 (Ser272) is a Phosphoserine. Phosphoserine; by PKA is present on Ser339. Residues 393-647 (LQSEFMEIPM…EFVHHALCLY (255 aa)) enclose the Tyrosine-protein phosphatase domain. Residues Asp554, 588–594 (CSAGIGR), and Gln632 contribute to the substrate site. Catalysis depends on Cys588, which acts as the Phosphocysteine intermediate.

Belongs to the protein-tyrosine phosphatase family. Receptor class 7 subfamily. As to quaternary structure, interacts with MAPKs. In terms of tissue distribution, detected in cerebrospinal fluid (at protein level). Expressed in brain, placenta, small intestine, stomach, uterus and weakly in the prostate. Isoform alpha has been observed only in the brain. Isoform gamma is expressed in brain, placenta and uterus. Isoform delta is expressed in brain, kidney, placenta, prostate, small intestine and uterus.

The protein resides in the secreted. The protein localises to the cell membrane. Its subcellular location is the cytoplasm. It localises to the perinuclear region. It catalyses the reaction O-phospho-L-tyrosyl-[protein] + H2O = L-tyrosyl-[protein] + phosphate. Sequesters mitogen-activated protein kinases (MAPKs) such as MAPK1, MAPK3 and MAPK14 in the cytoplasm in an inactive form. The MAPKs bind to a dephosphorylated kinase interacting motif, phosphorylation of which by the protein kinase A complex releases the MAPKs for activation and translocation into the nucleus. The chain is Receptor-type tyrosine-protein phosphatase R (PTPRR) from Homo sapiens (Human).